Reading from the N-terminus, the 334-residue chain is Holliday junction branch migration complex subunit RuvB (334 aa).

The segment at 4-184 (ADRIISPNAT…FGIVQRLEFY (181 aa)) is large ATPase domain (RuvB-L). Residues Ile-23, Arg-24, Gly-65, Lys-68, Thr-69, Thr-70, 131-133 (EDY), Arg-174, Tyr-184, and Arg-221 each bind ATP. Thr-69 lines the Mg(2+) pocket. Residues 185–255 (SVEDLRHIVA…VADKALNMLN (71 aa)) form a small ATPAse domain (RuvB-S) region. A head domain (RuvB-H) region spans residues 258–334 (LHGFDHMDRR…YNHFGLTMPE (77 aa)). DNA-binding residues include Arg-313 and Arg-318.

Belongs to the RuvB family. Homohexamer. Forms an RuvA(8)-RuvB(12)-Holliday junction (HJ) complex. HJ DNA is sandwiched between 2 RuvA tetramers; dsDNA enters through RuvA and exits via RuvB. An RuvB hexamer assembles on each DNA strand where it exits the tetramer. Each RuvB hexamer is contacted by two RuvA subunits (via domain III) on 2 adjacent RuvB subunits; this complex drives branch migration. In the full resolvosome a probable DNA-RuvA(4)-RuvB(12)-RuvC(2) complex forms which resolves the HJ.

The protein localises to the cytoplasm. It catalyses the reaction ATP + H2O = ADP + phosphate + H(+). Functionally, the RuvA-RuvB-RuvC complex processes Holliday junction (HJ) DNA during genetic recombination and DNA repair, while the RuvA-RuvB complex plays an important role in the rescue of blocked DNA replication forks via replication fork reversal (RFR). RuvA specifically binds to HJ cruciform DNA, conferring on it an open structure. The RuvB hexamer acts as an ATP-dependent pump, pulling dsDNA into and through the RuvAB complex. RuvB forms 2 homohexamers on either side of HJ DNA bound by 1 or 2 RuvA tetramers; 4 subunits per hexamer contact DNA at a time. Coordinated motions by a converter formed by DNA-disengaged RuvB subunits stimulates ATP hydrolysis and nucleotide exchange. Immobilization of the converter enables RuvB to convert the ATP-contained energy into a lever motion, pulling 2 nucleotides of DNA out of the RuvA tetramer per ATP hydrolyzed, thus driving DNA branch migration. The RuvB motors rotate together with the DNA substrate, which together with the progressing nucleotide cycle form the mechanistic basis for DNA recombination by continuous HJ branch migration. Branch migration allows RuvC to scan DNA until it finds its consensus sequence, where it cleaves and resolves cruciform DNA. This chain is Holliday junction branch migration complex subunit RuvB, found in Hahella chejuensis (strain KCTC 2396).